A 119-amino-acid chain; its full sequence is Ribonuclease P protein component (119 aa).

It belongs to the RnpA family. As to quaternary structure, consists of a catalytic RNA component (M1 or rnpB) and a protein subunit.

It carries out the reaction Endonucleolytic cleavage of RNA, removing 5'-extranucleotides from tRNA precursor.. Its function is as follows. RNaseP catalyzes the removal of the 5'-leader sequence from pre-tRNA to produce the mature 5'-terminus. It can also cleave other RNA substrates such as 4.5S RNA. The protein component plays an auxiliary but essential role in vivo by binding to the 5'-leader sequence and broadening the substrate specificity of the ribozyme. In Chlamydia muridarum (strain MoPn / Nigg), this protein is Ribonuclease P protein component.